A 299-amino-acid polypeptide reads, in one-letter code: Phosphoribosylaminoimidazole-succinocarboxamide synthase (299 aa).

It belongs to the SAICAR synthetase family.

The enzyme catalyses 5-amino-1-(5-phospho-D-ribosyl)imidazole-4-carboxylate + L-aspartate + ATP = (2S)-2-[5-amino-1-(5-phospho-beta-D-ribosyl)imidazole-4-carboxamido]succinate + ADP + phosphate + 2 H(+). It functions in the pathway purine metabolism; IMP biosynthesis via de novo pathway; 5-amino-1-(5-phospho-D-ribosyl)imidazole-4-carboxamide from 5-amino-1-(5-phospho-D-ribosyl)imidazole-4-carboxylate: step 1/2. The polypeptide is Phosphoribosylaminoimidazole-succinocarboxamide synthase (Leifsonia xyli subsp. xyli (strain CTCB07)).